Reading from the N-terminus, the 289-residue chain is MSLILPLEKPALNLRPLLWLLLPLLALATLFFWPLSLIVEQALRGANGEIGLETFRQVVDSKRFVGALLNTLQIAFFATAGCLLLGSVMSLILVFIPFPGSELIGRVVDTFIALPTFLITLAFTFIYGSAGLLNGALMSLFAFELPPVDFLYSMQGVILAEITVFTPLVMRPLMAALRQIDKSQLEAASILGAHPLRVIGQVIFPAALPALMASGSLCLLLTTNEFGIVLFIGAKGVNTLPMMVYSKAILESDYTVACMIALINIVLSLGLFSLYRLAASRTGVRSQPC.

Transmembrane regions (helical) follow at residues 19–39 (WLLLPLLALATLFFWPLSLIV), 76–96 (FFATAGCLLLGSVMSLILVFI), 111–131 (FIALPTFLITLAFTFIYGSAG), 150–170 (FLYSMQGVILAEITVFTPLVM), 202–222 (VIFPAALPALMASGSLCLLLT), and 254–274 (YTVACMIALINIVLSLGLFSL). The ABC transmembrane type-1 domain maps to 68–275 (LLNTLQIAFF…VLSLGLFSLY (208 aa)).

The protein belongs to the binding-protein-dependent transport system permease family.

The protein localises to the cell inner membrane. Its function is as follows. Probably part of the PhnSTUV complex (TC 3.A.1.11.5) involved in 2-aminoethylphosphonate import. Probably responsible for the translocation of the substrate across the membrane. In Salmonella typhi, this protein is Putative 2-aminoethylphosphonate transport system permease protein PhnU (phnU).